A 202-amino-acid polypeptide reads, in one-letter code: Riboflavin synthase (202 aa).

Lumazine-binding repeat units follow at residues 1–101 (MFTG…MGGH) and 102–198 (LVFG…ARLA). 2,4-dihydroxypteridine contacts are provided by residues 4–6 (GII), 47–49 (CLT), 66–68 (EAW), 105–107 (GHV), lysine 140, 149–151 (SLT), and 163–168 (LLIRHS).

Homotrimer.

The catalysed reaction is 2 6,7-dimethyl-8-(1-D-ribityl)lumazine + H(+) = 5-amino-6-(D-ribitylamino)uracil + riboflavin. The protein operates within cofactor biosynthesis; riboflavin biosynthesis; riboflavin from 2-hydroxy-3-oxobutyl phosphate and 5-amino-6-(D-ribitylamino)uracil: step 2/2. Its activity is regulated as follows. Is inhibited by riboflavin. Product inhibition may be the major mechanism by which RS regulates its enzymatic activity in vivo. Catalyzes the dismutation of two molecules of 6,7-dimethyl-8-ribityllumazine, resulting in the formation of riboflavin and 5-amino-6-(D-ribitylamino)uracil. This is Riboflavin synthase from Brucella abortus (strain 2308).